A 181-amino-acid polypeptide reads, in one-letter code: 3-hexulose-6-phosphate isomerase (181 aa).

The region spanning 27–168 is the SIS domain; sequence ILSLVDAAGR…IAKLVDQKGL (142 aa). Residues serine 45 and 84–89 each bind substrate; that span reads SGSGST. Glutamate 148 functions as the Proton acceptor in the catalytic mechanism.

The protein belongs to the SIS family. PHI subfamily. In terms of assembly, homodimer.

It carries out the reaction D-arabino-hex-3-ulose 6-phosphate = beta-D-fructose 6-phosphate. It functions in the pathway one-carbon metabolism; formaldehyde assimilation via RuMP pathway; D-fructose 6-phosphate from D-ribulose 5-phosphate and formaldehyde: step 2/2. Functionally, catalyzes the isomerization between 3-hexulose 6-phosphate and fructose 6-phosphate. In Methylomonas aminofaciens, this protein is 3-hexulose-6-phosphate isomerase (rmpB).